The following is a 585-amino-acid chain: Formate--tetrahydrofolate ligase (585 aa).

An ATP-binding site is contributed by 65–72 (TPHGEGKT).

This sequence belongs to the formate--tetrahydrofolate ligase family.

The enzyme catalyses (6S)-5,6,7,8-tetrahydrofolate + formate + ATP = (6R)-10-formyltetrahydrofolate + ADP + phosphate. It functions in the pathway one-carbon metabolism; tetrahydrofolate interconversion. This chain is Formate--tetrahydrofolate ligase, found in Shewanella baltica (strain OS155 / ATCC BAA-1091).